A 360-amino-acid chain; its full sequence is Lipid-A-disaccharide synthase (360 aa).

This sequence belongs to the LpxB family.

The catalysed reaction is a lipid X + a UDP-2-N,3-O-bis[(3R)-3-hydroxyacyl]-alpha-D-glucosamine = a lipid A disaccharide + UDP + H(+). It functions in the pathway bacterial outer membrane biogenesis; LPS lipid A biosynthesis. Its function is as follows. Condensation of UDP-2,3-diacylglucosamine and 2,3-diacylglucosamine-1-phosphate to form lipid A disaccharide, a precursor of lipid A, a phosphorylated glycolipid that anchors the lipopolysaccharide to the outer membrane of the cell. The sequence is that of Lipid-A-disaccharide synthase from Helicobacter acinonychis (strain Sheeba).